A 1107-amino-acid polypeptide reads, in one-letter code: Unconventional myosin-Ie (1107 aa).

One can recognise a Myosin motor domain in the interval 19 to 692 (SGVDDMVLLS…SLFLLEEMRE (674 aa)). Residue 112-119 (GESGAGKT) coordinates ATP. The actin-binding stretch occupies residues 581 to 591 (PHYIRCIKPNE). The region spanning 695-724 (YDGYARVIQKTWRKFVARKKYVQMREEASD) is the IQ domain. The 193-residue stretch at 730-922 (KERRRNSINR…NKVLQVSIGP (193 aa)) folds into the TH1 domain. The interval 919-1052 (SIGPGLPKNS…KPQPKPKPQV (134 aa)) is disordered. Composition is skewed to polar residues over residues 979-989 (NQRSNQKSLYT) and 998-1012 (RQQS…QTPE). Serine 1001 is subject to Phosphoserine. Pro residues predominate over residues 1034–1051 (RPPPAGGRPKPQPKPKPQ). An SH3 domain is found at 1050-1107 (PQVPQCKALYAYDAQDTDELSFNANDIIDIIKEDPSGWWTGRLRGKQGLFPNNYVTKI).

It belongs to the TRAFAC class myosin-kinesin ATPase superfamily. Myosin family. As to quaternary structure, interacts with CALM and F-actin. Interacts (via SH3 domain) with SYNJ1, DNM1 and DNM2. Interacts with ARL14EP. Interacts with CARMIL1. In terms of tissue distribution, detected in kidney glomeruli (at protein level). Detected in utricle.

Its subcellular location is the cytoplasm. It localises to the cell junction. The protein resides in the cytoplasmic vesicle. It is found in the clathrin-coated vesicle. The protein localises to the cytoskeleton. In terms of biological role, myosins are actin-based motor molecules with ATPase activity. Unconventional myosins serve in intracellular movements. Their highly divergent tails bind to membranous compartments, which are then moved relative to actin filaments. Binds to membranes containing anionic phospholipids via its tail domain. Involved in clathrin-mediated endocytosis and intracellular movement of clathrin-coated vesicles. Required for normal morphology of the glomerular basement membrane, normal development of foot processes by kidney podocytes and normal kidney function. In dendritic cells, may control the movement of class II-containing cytoplasmic vesicles along the actin cytoskeleton by connecting them with the actin network via ARL14EP and ARL14. The sequence is that of Unconventional myosin-Ie (Myo1e) from Mus musculus (Mouse).